Reading from the N-terminus, the 560-residue chain is Formate--tetrahydrofolate ligase (560 aa).

69–76 (TPAGEGKS) provides a ligand contact to ATP.

The protein belongs to the formate--tetrahydrofolate ligase family.

The catalysed reaction is (6S)-5,6,7,8-tetrahydrofolate + formate + ATP = (6R)-10-formyltetrahydrofolate + ADP + phosphate. The protein operates within one-carbon metabolism; tetrahydrofolate interconversion. In Bacillus pumilus (strain SAFR-032), this protein is Formate--tetrahydrofolate ligase.